The following is an 835-amino-acid chain: MSRRKQGKPQHLSKREFSPEPLEAILTDDEPDHGPLGAPEGDHDLLTCGQCQMNFPLGDILIFIEHKRKQCNGSLCLEKAVDKPPSPSPIEMKKASNPVEVGIQVTPEDDDCLSTSSRGICPKQEHIADKLLHWRGLSSPRSAHGALIPTPGMSAEYAPQGICKDEPSSYTCTTCKQPFTSAWFLLQHAQNTHGLRIYLESEHGSPLTPRVGIPSGLGAECPSQPPLHGIHIADNNPFNLLRIPGSVSREASGLAEGRFPPTPPLFSPPPRHHLDPHRIERLGAEEMALATHHPSAFDRVLRLNPMAMEPPAMDFSRRLRELAGNTSSPPLSPGRPSPMQRLLQPFQPGSKPPFLATPPLPPLQSAPPPSQPPVKSKSCEFCGKTFKFQSNLVVHRRSHTGEKPYKCNLCDHACTQASKLKRHMKTHMHKSSPMTVKSDDGLSTASSPEPGTSDLVGSASSALKSVVAKFKSENDPNLIPENGDEEEEEDDEEEEEEEEEEEEELTESERVDYGFGLSLEAARHHENSSRGAVVGVGDESRALPDVMQGMVLSSMQHFSEAFHQVLGEKHKRGHLAEAEGHRDTCDEDSVAGESDRIDDGTVNGRGCSPGESASGGLSKKLLLGSPSSLSPFSKRIKLEKEFDLPPAAMPNTENVYSQWLAGYAASRQLKDPFLSFGDSRQSPFASSSEHSSENGSLRFSTPPGELDGGISGRSGTGSGGSTPHISGPGPGRPSSKEGRRSDTCEYCGKVFKNCSNLTVHRRSHTGERPYKCELCNYACAQSSKLTRHMKTHGQVGKDVYKCEICKMPFSVYSTLEKHMKKWHSDRVLNNDIKTE.

Over residues 1–12 (MSRRKQGKPQHL) the composition is skewed to basic residues. Residues 1-41 (MSRRKQGKPQHLSKREFSPEPLEAILTDDEPDHGPLGAPEG) form a disordered region. Residues 1–210 (MSRRKQGKPQ…SEHGSPLTPR (210 aa)) are required for nuclear body formation and for SUMO1 recruitment. A C2HC-type zinc finger spans residues 45–71 (LLTCGQCQMNFPLGDILIFIEHKRKQC). Positions 48, 51, 66, and 71 each coordinate Zn(2+). Position 86 is a phosphoserine (serine 86). Residues lysine 123 and lysine 164 each participate in a glycyl lysine isopeptide (Lys-Gly) (interchain with G-Cter in SUMO2) cross-link. The segment at 170-193 (YTCTTCKQPFTSAWFLLQHAQNTH) adopts a C2H2-type 1 zinc-finger fold. Residue serine 205 is modified to Phosphoserine. The residue at position 271 (arginine 271) is an Asymmetric dimethylarginine. The interval 323 to 376 (AGNTSSPPLSPGRPSPMQRLLQPFQPGSKPPFLATPPLPPLQSAPPPSQPPVKS) is disordered. Phosphoserine occurs at positions 332 and 337. A compositionally biased stretch (pro residues) spans 355–372 (LATPPLPPLQSAPPPSQP). C2H2-type zinc fingers lie at residues 377–399 (KSCE…RRSH) and 405–429 (YKCN…THMH). Positions 421 to 430 (KRHMKTHMHK) are enriched in basic residues. 3 disordered regions span residues 421 to 458 (KRHM…LVGS), 471 to 512 (KSEN…ERVD), and 572 to 619 (RGHL…GLSK). The span at 441 to 450 (GLSTASSPEP) shows a compositional bias: polar residues. A phosphoserine mark is found at serine 446 and serine 447. Residues 482 to 506 (NGDEEEEEDDEEEEEEEEEEEEELT) are compositionally biased toward acidic residues. The segment covering 574 to 584 (HLAEAEGHRDT) has biased composition (basic and acidic residues). Serine 608 bears the Phosphoserine mark. Residue lysine 620 forms a Glycyl lysine isopeptide (Lys-Gly) (interchain with G-Cter in SUMO2) linkage. Serine 625 and serine 630 each carry phosphoserine. A Glycyl lysine isopeptide (Lys-Gly) (interchain with G-Cter in SUMO1) cross-link involves residue lysine 634. The disordered stretch occupies residues 678-740 (DSRQSPFASS…GRPSSKEGRR (63 aa)). The span at 682-696 (SPFASSSEHSSENGS) shows a compositional bias: low complexity. Threonine 701 bears the Phosphothreonine mark. Residues 706-720 (LDGGISGRSGTGSGG) show a composition bias toward gly residues. Residues 737–835 (EGRRSDTCEY…RVLNNDIKTE (99 aa)) are DNA-binding. The C2H2-type 4 zinc-finger motif lies at 742-764 (DTCEYCGKVFKNCSNLTVHRRSH). 4 residues coordinate Zn(2+): cysteine 744, cysteine 747, histidine 760, and histidine 764. Positions 765–769 (TGERP) are disordered. A C2H2-type 5 zinc finger spans residues 770 to 792 (YKCELCNYACAQSSKLTRHMKTH). Positions 772, 775, 788, and 792 each coordinate Zn(2+). Residues 793–799 (GQVGKDV) are disordered. The C2H2-type 6 zinc finger occupies 800-823 (YKCEICKMPFSVYSTLEKHMKKWH). Cysteine 802, cysteine 805, histidine 818, and histidine 823 together coordinate Zn(2+). A Glycyl lysine isopeptide (Lys-Gly) (interchain with G-Cter in SUMO2) cross-link involves residue lysine 833.

Homotetrameric; self-associates via C2HC-type zinc finger domain. Interacts with MTA2, a component of the nucleosome remodeling and deacetylase (NuRD) repressor complex. Interacts (via its C2H2-type zinc finger domains 4, 5 and 6) with promoter region of gamma-globulin. Interacts with NR2F1, PIAS3, NR2F2 and NR2F6. Isoform 1, isoform 2 and isoform 3 form homodimers and heterodimers. Isoform 2 interacts with TBR1. Post-translationally, sumoylated with SUMO1. In terms of tissue distribution, expressed at high levels in brain, spleen thymus, bone marrow and testis. Expressed in CD34-positive myeloid precursor cells, B-cells, monocytes and megakaryocytes. Expression is tightly regulated during B-cell development. As to expression, expressed in fetal and adult brain, and in the plasmacytoid dendritic cell.

Its subcellular location is the cytoplasm. The protein resides in the nucleus. It localises to the chromosome. The protein localises to the nucleus matrix. Its function is as follows. Transcription factor. Associated with the BAF SWI/SNF chromatin remodeling complex. Binds to the 5'-TGACCA-3' sequence motif in regulatory regions of target genes, including a distal promoter of the HBG1 hemoglobin subunit gamma-1 gene. Involved in regulation of the developmental switch from gamma- to beta-globin, probably via direct repression of HBG1; hence indirectly repressing fetal hemoglobin (HbF) level. Involved in brain development. May play a role in hematopoiesis. Essential factor in lymphopoiesis required for B-cell formation in fetal liver. May function as a modulator of the transcriptional repression activity of NR2F2. The protein is BCL11 transcription factor A (BCL11A) of Homo sapiens (Human).